Consider the following 810-residue polypeptide: Phospholipase D alpha 1 (810 aa).

Residues 1–126 (MAQHLLHGTL…INGEEVDQWV (126 aa)) form the C2 domain. Residue Asp187 participates in Ca(2+) binding. The PLD phosphodiesterase 1 domain occupies 327 to 366 (TMFTHHQKIVVVDSEMPSRGGSEMRRIVSFVGGIDLCDGR). Active-site residues include His332, Lys334, and Asp339. An a 1,2-diacyl-sn-glycero-3-phosphate-binding site is contributed by His332. Positions 372 and 406 each coordinate Ca(2+). A 1,2-diacyl-sn-glycero-3-phosphate is bound by residues Gln522 and His661. Positions 656–683 (FMIYVHTKMMIVDDEYIIIGSANINQRS) constitute a PLD phosphodiesterase 2 domain. Residues His661, Lys663, and Asp668 contribute to the active site. Glu722 contacts Ca(2+).

This sequence belongs to the phospholipase D family. C2-PLD subfamily. As to quaternary structure, interacts with GPA1. This binding inhibits PLDALPHA1 activity and is relieved by GTP. Requires Ca(2+) as cofactor. Highly expressed in roots, stems and flowers, moderately in leaves, seedlings and siliques. Not detected in seeds.

It localises to the cytoplasm. The protein localises to the cell membrane. The protein resides in the mitochondrion membrane. Its subcellular location is the microsome membrane. It is found in the vacuole. It localises to the cytoplasmic vesicle. The protein localises to the clathrin-coated vesicle. It catalyses the reaction a 1,2-diacyl-sn-glycero-3-phosphocholine + H2O = a 1,2-diacyl-sn-glycero-3-phosphate + choline + H(+). Not inhibited by neomycin. Its function is as follows. Hydrolyzes glycerol-phospholipids at the terminal phosphodiesteric bond to generate phosphatidic acids (PA). Plays an important role in various cellular processes, including phytohormone action and response to stress, characterized by acidification of the cell. Involved in wound induction of jasmonic acid. May be involved in membrane lipid remodeling. Probably involved in freezing tolerance by modulating the cold-responsive genes and accumulation of osmolytes. Can use phosphatidylcholine (PC), phosphatidylethanolamine (PE) and phosphatidylglycerol (PG) as substrates, both in presence or in absence of PIP2. Its main substrate is phosphatidylcholine. Stimulates the intrinsic GTPase activity of GPA1 upon binding. Mediates the abscisic acid effects on stomata through interaction with GPA1 and the production of phosphatidic acid that bind to ABI1. Involved in seed aging and deterioration. Involved in microtubule stabilization and salt tolerance. Involved in abscisic acid-induced stomatal closure. The polypeptide is Phospholipase D alpha 1 (Arabidopsis thaliana (Mouse-ear cress)).